Reading from the N-terminus, the 170-residue chain is Transcriptional repressor NrdR (170 aa).

A zinc finger spans residues 3–34 (CPFCRHPDSRVVDSRTSEDGSSIRRRRQCPEC). The ATP-cone domain occupies 46-136 (LSVVKRSGVA…VYRGFSSLED (91 aa)). The segment at 148–170 (RENEGDPDADGSADAPVRLTTSV) is disordered.

It belongs to the NrdR family. Requires Zn(2+) as cofactor.

Negatively regulates transcription of bacterial ribonucleotide reductase nrd genes and operons by binding to NrdR-boxes. This is Transcriptional repressor NrdR from Beutenbergia cavernae (strain ATCC BAA-8 / DSM 12333 / CCUG 43141 / JCM 11478 / NBRC 16432 / NCIMB 13614 / HKI 0122).